We begin with the raw amino-acid sequence, 281 residues long: Hepatitis A virus cellular receptor 2 homolog (281 aa).

An N-terminal signal peptide occupies residues 1–19 (MFSGLTLNCVLLLLQLLLA). The Ig-like V-type domain maps to 20–125 (RSLENAYVFE…PGLMNDKKLE (106 aa)). The Extracellular segment spans residues 20 to 193 (RSLENAYVFE…KDSGETIRTA (174 aa)). Disulfide bonds link C38–C111, C52–C63, and C58–C110. S61 and Q62 together coordinate a 1,2-diacyl-sn-glycero-3-phospho-L-serine. N-linked (GlcNAc...) asparagine glycans are attached at residues N74 and N100. An a 1,2-diacyl-sn-glycero-3-phospho-L-serine-binding site is contributed by R112. Ca(2+) contacts are provided by F115 and G117. Residue M119 participates in a 1,2-diacyl-sn-glycero-3-phospho-L-serine binding. N120 serves as a coordination point for Ca(2+). The segment at 139–160 (QTAHGDSTTASPRTLTTERNGS) is disordered. The O-linked (GalNAc...) threonine glycan is linked to T146. Residue N172 is glycosylated (N-linked (GlcNAc...) asparagine). A helical transmembrane segment spans residues 194–214 (IHIGVGVSAGLTLALIIGVLI). Over 215 to 281 (LKWYSCKKKK…YCYVNSQQPS (67 aa)) the chain is Cytoplasmic. An interaction with BAG6 region spans residues 252–270 (EENIYTIEENVYEVENSNE). At Y256 the chain carries Phosphotyrosine; by ITK.

Belongs to the immunoglobulin superfamily. TIM family. In terms of assembly, interacts with HMGB1; impairs HMGB1 binding to B-DNA and likely HMGB1-mediated innate immune response. Interacts with BAG6. Interacts (phosphorylated) with PIK3R1 and PIK3R2. Interacts (not dependent on its phosphorylation status) with FYN. Interacts (in basal state T-cells) with VAV1; AKT1/2, LCP2, ZAP70, SYK, PIK3R1, FYN, SH3BP2 and SH2D2A. Interacts (in activated T-cells) with LCK and PLCG. Interacts with ILF3; this interaction promotes ILF3 ubiquitination and degradation. In terms of processing, phosphorylated on tyrosine residues; modestly increased after TCR/CD28 stimulation. Can be phosphorylated in the cytoplasmic domain by FYN. Phosphorylation at Tyr-256 is increased by stimulation with ligand LGALS9. N-glycosylated. As to expression, expressed in T-helper type 1 lymphocytes. Not expressed by naive T-cells but up-regulated as they differentiate into T-helper-1 cells. Also expressed by differentiated type 1 CD8+ cytotoxic T-cells. Expressed on peritoneal exudate macrophages, monocytes, and splenic dendritic cells (DCs). Expression on natural killer (NK) cells is inversely associated with IFN-gamma production during the initial 24 hours of LPS-induced endotoxic shock. Expressed on mast cells.

It localises to the membrane. The protein resides in the cell junction. It is found in the secreted. In terms of biological role, cell surface receptor implicated in modulating innate and adaptive immune responses. Generally accepted to have an inhibiting function. Reports on stimulating functions suggest that the activity may be influenced by the cellular context and/or the respective ligand. Regulates macrophage activation. Inhibits T-helper type 1 lymphocyte (Th1)-mediated auto- and alloimmune responses and promotes immunological tolerance. In CD8+ cells attenuates TCR-induced signaling, specifically by blocking NF-kappaB and NFAT promoter activities resulting in the loss of IL-2 secretion. The function may implicate its association with LCK proposed to impair phosphorylation of TCR subunits. In contrast, shown to activate TCR-induced signaling in T-cells probably implicating ZAP70, LCP2, LCK and FYN. Expressed on Treg cells can inhibit Th17 cell responses. Receptor for LGALS9. Binding to LGALS9 is believed to result in suppression of T-cell responses; the resulting apoptosis of antigen-specific cells may implicate HAVCR2 phosphorylation and disruption of its association with BAG6. Binding to LGALS9 is proposed to be involved in innate immune response to intracellular pathogens. Expressed on Th1 cells interacts with LGALS9 expressed on Mycobacterium tuberculosis-infected macrophages to stimulate antibactericidal activity including IL-1 beta secretion and to restrict intracellular bacterial growth. However, the function as receptor for LGALS9 has been challenged. Also reported to enhance CD8+ T-cell responses to an acute infection such as by Listeria monocytogenes. Receptor for phosphatidylserine (PtSer); PtSer-binding is calcium-dependent. May recognize PtSer on apoptotic cells leading to their phagocytosis. Mediates the engulfment of apoptotic cells by dendritic cells. Expressed on T-cells, promotes conjugation but not engulfment of apoptotic cells. Expressed on dendritic cells (DCs) positively regulates innate immune response and in synergy with Toll-like receptors promotes secretion of TNF-alpha. In tumor-imfiltrating DCs suppresses nucleic acid-mediated innate immune repsonse by interaction with HMGB1 and interfering with nucleic acid-sensing and trafficking of nucleid acids to endosomes. Can enhance mast cell production of Th2 cytokines Il-4, IL-6 and IL-13. Expressed on natural killer (NK) cells acts as a coreceptor to enhance IFN-gamma production in response to LGALS9. In contrast, shown to suppress NK cell-mediated cytotoxicity. Negatively regulates NK cell function in LPS-induced endotoxic shock. The sequence is that of Hepatitis A virus cellular receptor 2 homolog (Havcr2) from Mus musculus (Mouse).